The sequence spans 143 residues: Large-conductance mechanosensitive channel (143 aa).

Helical transmembrane passes span 10–30, 40–60, and 86–106; these read FAVK…GAFG, VIMP…LFLV, and GSFI…FMMV.

Belongs to the MscL family. As to quaternary structure, homopentamer.

It is found in the cell inner membrane. Functionally, channel that opens in response to stretch forces in the membrane lipid bilayer. May participate in the regulation of osmotic pressure changes within the cell. The protein is Large-conductance mechanosensitive channel of Paracidovorax citrulli (strain AAC00-1) (Acidovorax citrulli).